Here is a 573-residue protein sequence, read N- to C-terminus: Probable D-xylulose kinase A (573 aa).

Residues histidine 97, arginine 168, aspartate 284, and asparagine 285 each coordinate substrate. Residues tryptophan 366, 471-472 (GG), and asparagine 475 each bind ATP.

The protein belongs to the FGGY kinase family.

It localises to the cytoplasm. The catalysed reaction is D-xylulose + ATP = D-xylulose 5-phosphate + ADP + H(+). In terms of biological role, highly specific D-xylulose kinase which participates in the catabolism of xylose. Xylose is a major component of hemicelluloses such as xylan. Most fungi utilize D-xylose via three enzymatic reactions, xylose reductase (XR), xylitol dehydrogenase (XDH), and xylulokinase, to form xylulose 5-phosphate, which enters pentose phosphate pathway. This is Probable D-xylulose kinase A (xkiA) from Aspergillus fumigatus (strain ATCC MYA-4609 / CBS 101355 / FGSC A1100 / Af293) (Neosartorya fumigata).